Reading from the N-terminus, the 382-residue chain is UDP-4-amino-4-deoxy-L-arabinose--oxoglutarate aminotransferase (382 aa).

The residue at position 182 (lysine 182) is an N6-(pyridoxal phosphate)lysine.

Belongs to the DegT/DnrJ/EryC1 family. ArnB subfamily. Homodimer. The cofactor is pyridoxal 5'-phosphate.

The enzyme catalyses UDP-4-amino-4-deoxy-beta-L-arabinose + 2-oxoglutarate = UDP-beta-L-threo-pentopyranos-4-ulose + L-glutamate. It functions in the pathway nucleotide-sugar biosynthesis; UDP-4-deoxy-4-formamido-beta-L-arabinose biosynthesis; UDP-4-deoxy-4-formamido-beta-L-arabinose from UDP-alpha-D-glucuronate: step 2/3. It participates in bacterial outer membrane biogenesis; lipopolysaccharide biosynthesis. Catalyzes the conversion of UDP-4-keto-arabinose (UDP-Ara4O) to UDP-4-amino-4-deoxy-L-arabinose (UDP-L-Ara4N). The modified arabinose is attached to lipid A and is required for resistance to polymyxin and cationic antimicrobial peptides. The sequence is that of UDP-4-amino-4-deoxy-L-arabinose--oxoglutarate aminotransferase from Pectobacterium carotovorum subsp. carotovorum (strain PC1).